A 295-amino-acid polypeptide reads, in one-letter code: ATP synthase gamma chain (295 aa).

It belongs to the ATPase gamma chain family. In terms of assembly, F-type ATPases have 2 components, CF(1) - the catalytic core - and CF(0) - the membrane proton channel. CF(1) has five subunits: alpha(3), beta(3), gamma(1), delta(1), epsilon(1). CF(0) has three main subunits: a, b and c.

The protein localises to the cell membrane. Its function is as follows. Produces ATP from ADP in the presence of a proton gradient across the membrane. The gamma chain is believed to be important in regulating ATPase activity and the flow of protons through the CF(0) complex. The protein is ATP synthase gamma chain of Acetivibrio thermocellus (strain ATCC 27405 / DSM 1237 / JCM 9322 / NBRC 103400 / NCIMB 10682 / NRRL B-4536 / VPI 7372) (Clostridium thermocellum).